A 1134-amino-acid chain; its full sequence is DNA damage-binding protein 1 (1134 aa).

This sequence belongs to the DDB1 family. As to quaternary structure, interacts with cdt-1 and cul-4. In terms of tissue distribution, expressed at high levels in the spermatheca of adult hermaphrodites.

The protein resides in the cytoplasm. Its subcellular location is the nucleus. It functions in the pathway protein modification; protein ubiquitination. Functionally, plays a role in DNA repair. May be a component of an E3 ubiquitin-protein ligase which promotes histone ubiquitination in response to UV irradiation. Histone ubiquitination may be important for subsequent DNA repair. Promotes the degradation of the replication licensing factor cdt-1 during S-phase, thereby preventing rereplication of DNA during a single round of cell division. The sequence is that of DNA damage-binding protein 1 (ddb-1) from Caenorhabditis elegans.